Reading from the N-terminus, the 497-residue chain is Sestrin homolog (497 aa).

Residues S185 and S190 each carry the phosphoserine modification. Positions 226–241 (NANPDYDSQTAASSNG) are enriched in polar residues. The interval 226–255 (NANPDYDSQTAASSNGGAPPDSANAVADGP) is disordered.

The protein belongs to the sestrin family. Associates with the GATOR2 complex; the interaction is probably direct. Associates with the GATOR1 complex; the interaction is probably indirect and mediated by the GATOR2 complex. Highly expressed in muscle-enriched tissues (at protein level).

It localises to the nucleus. It is found in the cytoplasm. Functionally, functions as a negative feedback regulator of mTOR function. This Drosophila melanogaster (Fruit fly) protein is Sestrin homolog.